The chain runs to 133 residues: Thioredoxin-2, mitochondrial (133 aa).

The transit peptide at 1 to 29 directs the protein to the mitochondrion; sequence MRGFIANSLKPHMRSFALRRSFTSSRILR. The 104-residue stretch at 30 to 133 folds into the Thioredoxin domain; sequence KVNAVESFGD…LSSLLAKYQE (104 aa). Residues Cys-59 and Cys-62 each act as nucleophile in the active site. Cys-59 and Cys-62 are joined by a disulfide.

The protein belongs to the thioredoxin family. As to quaternary structure, interacts with arg3.

Its subcellular location is the mitochondrion. Functionally, disulfide reductase which serves multiple functions in mitochondria, protecting mitochondrial components against thiol-oxidative damage as a thiol-disulfide oxidoreductase, and supporting urea cycle and respiration in mitochondria in a manner independent of active site thiols. The protein is Thioredoxin-2, mitochondrial (trx2) of Schizosaccharomyces pombe (strain 972 / ATCC 24843) (Fission yeast).